Consider the following 265-residue polypeptide: Thiazole synthase (265 aa).

K106 serves as the catalytic Schiff-base intermediate with DXP. Residues G167, 193-194 (AG), and 215-216 (NT) contribute to the 1-deoxy-D-xylulose 5-phosphate site. The tract at residues 245–265 (GRIPRRARAEPSSPQLGLVGS) is disordered.

This sequence belongs to the ThiG family. Homotetramer. Forms heterodimers with either ThiH or ThiS.

It is found in the cytoplasm. It catalyses the reaction [ThiS sulfur-carrier protein]-C-terminal-Gly-aminoethanethioate + 2-iminoacetate + 1-deoxy-D-xylulose 5-phosphate = [ThiS sulfur-carrier protein]-C-terminal Gly-Gly + 2-[(2R,5Z)-2-carboxy-4-methylthiazol-5(2H)-ylidene]ethyl phosphate + 2 H2O + H(+). It participates in cofactor biosynthesis; thiamine diphosphate biosynthesis. In terms of biological role, catalyzes the rearrangement of 1-deoxy-D-xylulose 5-phosphate (DXP) to produce the thiazole phosphate moiety of thiamine. Sulfur is provided by the thiocarboxylate moiety of the carrier protein ThiS. In vitro, sulfur can be provided by H(2)S. This chain is Thiazole synthase, found in Methylobacterium sp. (strain 4-46).